The chain runs to 435 residues: Methylenetetrahydrofolate--tRNA-(uracil-5-)-methyltransferase TrmFO (435 aa).

FAD is bound at residue 9-14 (GGGLAG).

The protein belongs to the MnmG family. TrmFO subfamily. FAD is required as a cofactor.

Its subcellular location is the cytoplasm. The enzyme catalyses uridine(54) in tRNA + (6R)-5,10-methylene-5,6,7,8-tetrahydrofolate + NADH + H(+) = 5-methyluridine(54) in tRNA + (6S)-5,6,7,8-tetrahydrofolate + NAD(+). It catalyses the reaction uridine(54) in tRNA + (6R)-5,10-methylene-5,6,7,8-tetrahydrofolate + NADPH + H(+) = 5-methyluridine(54) in tRNA + (6S)-5,6,7,8-tetrahydrofolate + NADP(+). Catalyzes the folate-dependent formation of 5-methyl-uridine at position 54 (M-5-U54) in all tRNAs. The polypeptide is Methylenetetrahydrofolate--tRNA-(uracil-5-)-methyltransferase TrmFO (Geobacter sp. (strain M21)).